Reading from the N-terminus, the 1263-residue chain is Valine--tRNA ligase (1263 aa).

Residue serine 2 is modified to N-acetylserine. The region spanning 89-219 (GSRAAVLVQQ…YSGARSVTQQ (131 aa)) is the GST C-terminal domain. Residues 218–294 (QQPGSEVIAP…PGEKKDVSGA (77 aa)) form a disordered region. Basic and acidic residues-rich tracts occupy residues 234 to 248 (LKKE…EKFQ) and 259 to 274 (HGEK…KRDP). A 'HIGH' region motif is present at residues 343 to 353 (PNVTGSLHLGH). 2 positions are modified to phosphoserine: serine 436 and serine 526. N6-acetyllysine is present on lysine 644. The short motif at 861–865 (KMSKS) is the 'KMSKS' region element. Lysine 864 provides a ligand contact to ATP.

This sequence belongs to the class-I aminoacyl-tRNA synthetase family. In terms of assembly, forms high-molecular-mass aggregates with elongation factor 1.

The enzyme catalyses tRNA(Val) + L-valine + ATP = L-valyl-tRNA(Val) + AMP + diphosphate. Its activity is regulated as follows. Can be regulated by protein kinase C-dependent phosphorylation. The polypeptide is Valine--tRNA ligase (Vars1) (Mus musculus (Mouse)).